Here is a 269-residue protein sequence, read N- to C-terminus: MAVGIFDSGLGGLTVLDAAQKRLPDVDFLYYGDNSHAPYGVRDAEDIYELTHKAVHDMWDRGCNLVILACNTASAAALRRMQEAGVPEGKRVLGVFVPLIEALTERQWGDNSPPREVAVKHVALFATPATVASRAFQRELAFRAIGVDVEAQACGGVVDAIEEGDMILAEALVKSHVDALLRKMPRPEAAILGCTHYPLMEDVFQKALGPDVQVFSQGRLVADSLAHYLERRPEMIGGGNAGYVTTGNANRVSSRATQFLRREITFEAA.

Substrate contacts are provided by residues 7-8 (DS) and 39-40 (YG). Catalysis depends on cysteine 70, which acts as the Proton donor/acceptor. 71-72 (NT) lines the substrate pocket. Cysteine 194 (proton donor/acceptor) is an active-site residue. 195–196 (TH) is a substrate binding site.

The protein belongs to the aspartate/glutamate racemases family.

It carries out the reaction L-glutamate = D-glutamate. It functions in the pathway cell wall biogenesis; peptidoglycan biosynthesis. In terms of biological role, provides the (R)-glutamate required for cell wall biosynthesis. The chain is Glutamate racemase from Ruegeria sp. (strain TM1040) (Silicibacter sp.).